Reading from the N-terminus, the 236-residue chain is Uridylate kinase (236 aa).

Residue 12–15 (KLSG) participates in ATP binding. The tract at residues 20 to 25 (GEKGFG) is involved in allosteric activation by GTP. Gly-54 serves as a coordination point for UMP. The ATP site is built by Gly-55 and Arg-59. Residues Asp-72 and 133-140 (TGNPYFST) each bind UMP. Residues Asn-161, Tyr-166, and Asp-169 each contribute to the ATP site.

Belongs to the UMP kinase family. In terms of assembly, homohexamer.

The protein resides in the cytoplasm. The enzyme catalyses UMP + ATP = UDP + ADP. Its pathway is pyrimidine metabolism; CTP biosynthesis via de novo pathway; UDP from UMP (UMPK route): step 1/1. Its activity is regulated as follows. Allosterically activated by GTP. Inhibited by UTP. In terms of biological role, catalyzes the reversible phosphorylation of UMP to UDP. The chain is Uridylate kinase from Alkaliphilus oremlandii (strain OhILAs) (Clostridium oremlandii (strain OhILAs)).